A 211-amino-acid polypeptide reads, in one-letter code: Endonuclease V (211 aa).

Residues D37 and D102 each contribute to the Mg(2+) site.

It belongs to the endonuclease V family. It depends on Mg(2+) as a cofactor.

The protein localises to the cytoplasm. It catalyses the reaction Endonucleolytic cleavage at apurinic or apyrimidinic sites to products with a 5'-phosphate.. Its function is as follows. DNA repair enzyme involved in the repair of deaminated bases. Selectively cleaves double-stranded DNA at the second phosphodiester bond 3' to a deoxyinosine leaving behind the intact lesion on the nicked DNA. The protein is Endonuclease V of Ignicoccus hospitalis (strain KIN4/I / DSM 18386 / JCM 14125).